Consider the following 327-residue polypeptide: Melanoma-associated antigen B18 (327 aa).

Residues 1-19 (MPRGQKSKLRAREKRRQAR) are compositionally biased toward basic residues. Positions 1–85 (MPRGQKSKLR…SSDDSEDTED (85 aa)) are disordered. Polar residues predominate over residues 46 to 70 (MPTSPNMPMGEQSTFSHSYTSTSDQ). An MAGE domain is found at 91 to 289 (INHKVVLLVQ…DSFPTLYEAA (199 aa)).

Interacts with LNX1. In terms of tissue distribution, expressed in testis, stomach, large intestine, small intestine, spleen, lymph node, bone marrow lymphocytes and blood T-lymphocytes. Not detected in brain, heart, lung, liver or kidney (at protein level).

It is found in the cytoplasm. In terms of biological role, may enhance ubiquitin ligase activity of RING-type zinc finger-containing E3 ubiquitin-protein ligases. Proposed to act through recruitment and/or stabilization of the Ubl-conjugating enzyme (E2) at the E3:substrate complex. In Mus musculus (Mouse), this protein is Melanoma-associated antigen B18.